Consider the following 252-residue polypeptide: uncharacterized protein (252 aa).

28 to 35 (GCDGTGKS) is a binding site for ATP.

To E.coli YghS and YghT.

This is an uncharacterized protein from Escherichia coli O6:H1 (strain CFT073 / ATCC 700928 / UPEC).